Here is a 372-residue protein sequence, read N- to C-terminus: N-methyl-L-tryptophan oxidase (372 aa).

4-34 contacts FAD; it reads DLIIIGSGSVGAAAGYYATRAGLNVLMTDAH. Cysteine 308 is modified (S-8alpha-FAD cysteine).

It belongs to the MSOX/MTOX family. MTOX subfamily. In terms of assembly, monomer. FAD serves as cofactor.

It catalyses the reaction N(alpha)-methyl-L-tryptophan + O2 + H2O = L-tryptophan + formaldehyde + H2O2. In terms of biological role, catalyzes the oxidative demethylation of N-methyl-L-tryptophan. The sequence is that of N-methyl-L-tryptophan oxidase from Escherichia coli O139:H28 (strain E24377A / ETEC).